A 506-amino-acid polypeptide reads, in one-letter code: MMASQAMVPLRQLFVDGEWRPPAQGRRLPVVNPTTEAHIGEIPAGTAEDVDAAVAAARAALKRNRGRDWARAPGAVRAKYLRAIAAKVIERKQELAKLEALDCGKPYDEAAWDMDDVAGCFEYFADQAEALDKRQNSPVSLPMETFKCHLRREPIGVVGLITPWNYPLLMATWKVAPALAAGCAAVLKPSELASVTCLELADICKEVGLPPGVLNIVTGLGPDAGAPLSAHPDVDKVAFTGSFETGKKIMAAAAPMVKPVTLELGGKSPIVVFDDVDIDKAVEWTLFGCFWTNGQICSATSRLLVHTKIAKEFNEKMVAWAKNIKVSDPLEEGCRLGPVVSEGQYEKIKKFILNAKSEGATILTGGVRPAHLEKGFFIEPTIITDITTSMEIWREEVFGPVLCVKEFSTEDEAIELANDTQYGLAGAVISGDRERCQRLSEEIDAGIIWVNCSQPCFCQAPWGGNKRSGFGRELGEGGIDNYLSVKQVTEYISDEPWGWYRSPSKL.

Na(+) is bound at residue aspartate 102. Residues 162-164 (TPW) and 188-191 (KPSE) contribute to the NAD(+) site. Na(+) is bound at residue leucine 192. Residues 242-245 (SFET) and glutamate 263 contribute to the NAD(+) site. Glutamate 263 (proton acceptor) is an active-site residue. The Nucleophile role is filled by cysteine 297. NAD(+)-binding residues include glutamate 396 and tryptophan 462.

It belongs to the aldehyde dehydrogenase family.

It carries out the reaction 4-aminobutanal + NAD(+) + H2O = 4-aminobutanoate + NADH + 2 H(+). The catalysed reaction is 3-aminopropanal + NAD(+) + H2O = beta-alanine + NADH + 2 H(+). The enzyme catalyses 4-(trimethylamino)butanal + NAD(+) + H2O = 4-(trimethylamino)butanoate + NADH + 2 H(+). It catalyses the reaction 4-guanidinobutanal + NAD(+) + H2O = 4-guanidinobutanoate + NADH + 2 H(+). It carries out the reaction betaine aldehyde + NAD(+) + H2O = glycine betaine + NADH + 2 H(+). The protein operates within amine and polyamine biosynthesis; betaine biosynthesis via choline pathway; betaine from betaine aldehyde: step 1/1. Dehydrogenase that catalyzes the oxidation of several aminoaldehydes. Metabolizes and detoxifies aldehyde products of polyamine degradation to non-toxic amino acids. Catalyzes the oxidation of 4-aminobutanal and 3-aminopropanal to 4-aminobutanoate and beta-alanine, respectively. Catalyzes the oxidation of 4-(trimethylamino)butanal and 4-guanidinobutanal to 4-trimethylammoniobutanoate and 4-guanidinobutanoate, respectively. Catalyzes the oxidation of betaine aldehyde to glycine betaine. This Zea mays (Maize) protein is Aminoaldehyde dehydrogenase 1b.